The sequence spans 258 residues: Peptide methionine sulfoxide reductase A4, chloroplastic (258 aa).

The transit peptide at 1–53 (MQVLVVSPPLIAAASLSKPLNSLSKAALSFSRAKPICPFPQTSRRPISVYKSP) directs the protein to the chloroplast. Position 54 is an N-acetylmethionine (Met-54). The disordered stretch occupies residues 62–89 (GFGSRPQAQADPSSAAIAQGPDDDVPSS). Ser-245 carries the post-translational modification Phosphoserine.

It belongs to the MsrA Met sulfoxide reductase family. As to expression, expressed in rosette and cauline leaves, and at lower levels in stems and flowers (at protein level).

The protein localises to the plastid. The protein resides in the chloroplast stroma. It carries out the reaction L-methionyl-[protein] + [thioredoxin]-disulfide + H2O = L-methionyl-(S)-S-oxide-[protein] + [thioredoxin]-dithiol. The enzyme catalyses [thioredoxin]-disulfide + L-methionine + H2O = L-methionine (S)-S-oxide + [thioredoxin]-dithiol. In terms of biological role, catalyzes the reduction of methionine sulfoxide (MetSO) to methionine in proteins. Plays a protective role against oxidative stress by restoring activity to proteins that have been inactivated by methionine oxidation. Prevents the methionine sulfoxidation of the heat shock protein HSP21 and its subsequent inactivation. MSRA family specifically reduces the MetSO S-enantiomer. The chain is Peptide methionine sulfoxide reductase A4, chloroplastic (MSR4) from Arabidopsis thaliana (Mouse-ear cress).